The following is a 128-amino-acid chain: MAVTKEEVVEFISNMTVLELSEFIKELEEKFGVSAAAPAAAMMVAAPAAGGAADAAEEKTEFDVILKEAGANKIGVIKVVRALTSLGLKEAKEKVDGCPSTLKEAVSKEEAEDAKKQLTEAGAVVEVK.

It belongs to the bacterial ribosomal protein bL12 family. As to quaternary structure, homodimer. Part of the ribosomal stalk of the 50S ribosomal subunit. Forms a multimeric L10(L12)X complex, where L10 forms an elongated spine to which 2 to 4 L12 dimers bind in a sequential fashion. Binds GTP-bound translation factors.

In terms of biological role, forms part of the ribosomal stalk which helps the ribosome interact with GTP-bound translation factors. Is thus essential for accurate translation. This Desulfovibrio desulfuricans (strain ATCC 27774 / DSM 6949 / MB) protein is Large ribosomal subunit protein bL12.